The following is a 182-amino-acid chain: Adenine phosphoribosyltransferase (182 aa).

AMP is bound at residue A133–S137.

It belongs to the purine/pyrimidine phosphoribosyltransferase family. As to quaternary structure, homodimer. Mg(2+) serves as cofactor.

The protein resides in the cytoplasm. The protein localises to the nucleus. It catalyses the reaction AMP + diphosphate = 5-phospho-alpha-D-ribose 1-diphosphate + adenine. It functions in the pathway purine metabolism; AMP biosynthesis via salvage pathway; AMP from adenine: step 1/1. Catalyzes a salvage reaction resulting in the formation of AMP, that is energically less costly than de novo synthesis. This Yarrowia lipolytica (strain CLIB 122 / E 150) (Yeast) protein is Adenine phosphoribosyltransferase (APT1).